A 182-amino-acid polypeptide reads, in one-letter code: MTTIVSVRRKGHVVIGGDGQATLGNTVMKGNVRKVRRLYNDKVIAGFAGGTADAFTLFELFERKLEVHQGHLVKAAVELAKDWRTDRMLRRLEALLAVANESDSLIITGNGDVIQPENDLIAIGSGGPYAQSAARALLENTELGAREIVEKALGIAGDICIYTNQFHTIEELTSKAKDPENV.

Residue T2 is part of the active site. Na(+)-binding residues include G157, C160, and T163.

The protein belongs to the peptidase T1B family. HslV subfamily. As to quaternary structure, a double ring-shaped homohexamer of HslV is capped on each side by a ring-shaped HslU homohexamer. The assembly of the HslU/HslV complex is dependent on binding of ATP.

It localises to the cytoplasm. It catalyses the reaction ATP-dependent cleavage of peptide bonds with broad specificity.. With respect to regulation, allosterically activated by HslU binding. Its function is as follows. Protease subunit of a proteasome-like degradation complex believed to be a general protein degrading machinery. The polypeptide is ATP-dependent protease subunit HslV (Sodalis glossinidius (strain morsitans)).